A 59-amino-acid chain; its full sequence is Putative conotoxin (59 aa).

The N-terminal stretch at 1-25 is a signal peptide; it reads MGMRMMFTVFLLVVLATTVVPITLA. Positions 26–47 are excised as a propeptide; sequence SATDGRNAAANARVSPVISKSS.

The protein belongs to the conotoxin A superfamily. In terms of tissue distribution, expressed by the venom duct.

It is found in the secreted. Acts as a neurotoxin. The protein is Putative conotoxin of Conus imperialis (Imperial cone).